The primary structure comprises 87 residues: Phosphoribosyl-ATP pyrophosphatase (87 aa).

Belongs to the PRA-PH family.

The protein localises to the cytoplasm. It carries out the reaction 1-(5-phospho-beta-D-ribosyl)-ATP + H2O = 1-(5-phospho-beta-D-ribosyl)-5'-AMP + diphosphate + H(+). Its pathway is amino-acid biosynthesis; L-histidine biosynthesis; L-histidine from 5-phospho-alpha-D-ribose 1-diphosphate: step 2/9. This is Phosphoribosyl-ATP pyrophosphatase from Beutenbergia cavernae (strain ATCC BAA-8 / DSM 12333 / CCUG 43141 / JCM 11478 / NBRC 16432 / NCIMB 13614 / HKI 0122).